The chain runs to 913 residues: WD repeat-containing protein 44 (913 aa).

The span at 1–14 (MASESDTEEFYDAP) shows a compositional bias: acidic residues. The interval 1 to 24 (MASESDTEEFYDAPEDVHLGGGYP) is disordered. At Ala-2 the chain carries N-acetylalanine. A binding activity region spans residues 2–170 (ASESDTEEFY…SSTEQLNVLE (169 aa)). Phosphoserine is present on Ser-3. The FFAT-like motif signature appears at 9 to 15 (EFYDAPE). Position 11 is a phosphotyrosine (Tyr-11). Phosphoserine is present on residues Ser-27, Ser-50, Ser-66, Ser-71, Ser-81, Ser-96, and Ser-126. Residues 119-184 (EESQKAESQN…VLNKEAVEVK (66 aa)) are a coiled coil. A phosphothreonine mark is found at Thr-158 and Thr-219. The segment at 205-348 (AVEEVAPAKP…RPRSNSGREL (144 aa)) is disordered. Residues 211 to 257 (PAKPPRHLTPEPDIVASTKKPVPARPPPPTNFPPPRPPPPSRPAPPP) form an important for interaction with ARHGAP26 AND ARHGAP10 region. Over residues 233–256 (PARPPPPTNFPPPRPPPPSRPAPP) the composition is skewed to pro residues. At Ser-262 the chain carries Phosphoserine. Residues 262–278 (SELEFETLKTPDIDVPK) are compositionally biased toward basic and acidic residues. At Thr-271 the chain carries Phosphothreonine. Over residues 280-311 (NITSDSLLTASMASESTVKDSQPSLDLASATS) the composition is skewed to polar residues. The interval 334-347 (VMGPQRPRSNSGRE) is important for interaction with RAB11A. Phosphoserine; by PKB/AKT1 occurs at positions 342 and 344. Thr-349 bears the Phosphothreonine mark. Disordered regions lie at residues 397–424 (SNDAAQSDDEEKLQSQPTDTDGGRLKQK) and 459–480 (DEVFHTDQDDPSSSDDEGMPYT). Phosphoserine is present on residues Ser-403, Ser-470, Ser-471, and Ser-472. A compositionally biased stretch (acidic residues) spans 467–476 (DDPSSSDDEG). Phosphotyrosine is present on Tyr-479. The WD 1 repeat unit spans residues 509–548 (EHMGAVWTMKFSHCGRLLASAGQDNVVRIWALKNAFDYFN). Positions 557–593 (EGRVSPSPSQESLSSSKSDTDTGVCSGTDEDPDDKNA) are disordered. Phosphoserine is present on residues Ser-561 and Ser-565. Residues 561–573 (SPSPSQESLSSSK) show a composition bias toward low complexity. WD repeat units lie at residues 605–643 (GHTADLLDLSWSKNYFLLSSSMDKTVRLWHISRRECLCC), 645–685 (QHID…VALW), 690–729 (GQTKLITAANFCQNGKYAVIGTYDGRCIFYDTEHLKYHTQ), 740–779 (KVGRKITGIEPLPGENKILVTSNDSRIRLYDLRDLSLSMK), 784–823 (VNSSSQIKASFSHDFTYLVSGSEDKYVYIWSTYHDLSKFT), and 876–913 (VLDATPSGIMKTDNTEVLLSADFTGAIKVFVNKRKNVS).

Interacts with the GTP-bound form of RAB11A and RAB11B. Interacts with GRAF1/ARHGAP26 or GRAF2/ARHGAP10; the interaction connects the endoplasmic reticulum (ER) with the endosomal tubule. Interacts (via FFAT-like motif) with VAPA (via MSP domain) or VAPB (via MSP domain); the interaction connects the ER with the endosomal tubule. Does not bind to RAB7, RAB10, RAB14, RAB35 and RAB8A. Post-translationally, phosphorylated by ATK1; the phosphorylation stabilizes its interaction with RAB11A and RAB11B.

Its subcellular location is the cytoplasm. The protein localises to the cytosol. The protein resides in the perinuclear region. It localises to the endosome membrane. It is found in the golgi apparatus. Its subcellular location is the trans-Golgi network. Downstream effector for Rab11 which regulates Rab11 intracellular membrane trafficking functions such as endocytic recycling, intracellular ciliogenesis and protein export. ATK1-mediated phosphorylation of WDR44 induces binding to Rab11 which activates endocytic recycling of transferrin receptor back to the plasma membrane. When bound to Rab11, prevents the formation of the ciliogenic Rab11-Rabin8/RAB3IP-RAB11FIP3 complex, therefore inhibiting preciliary trafficking and ciliogenesis. Participates in neo-synthesized protein export by connecting the endoplasmic reticulum (ER) with the endosomal tubule via direct interactions with the integral ER proteins VAPA or VAPB and the endosomal protein GRAFs (GRAF1/ARHGAP26 or GRAF2/ARHGAP10), which facilitates the transfer of proteins such as E-cadherin, MPP14 and CFTR into a Rab8-Rab10-Rab11-dependent export route. This is WD repeat-containing protein 44 from Homo sapiens (Human).